A 130-amino-acid chain; its full sequence is Snaclec B8 (130 aa).

Intrachain disulfides connect C2–C13, C30–C124, and C99–C116. Residues 9–125 (HEGHCYKVFK…CELAYHFICM (117 aa)) form the C-type lectin domain.

This sequence belongs to the snaclec family. As to quaternary structure, heterodimer; disulfide-linked. As to expression, expressed by the venom gland.

The protein resides in the secreted. Functionally, interferes with one step of hemostasis (modulation of platelet aggregation, or coagulation cascade, for example). In Macrovipera lebetinus (Levantine viper), this protein is Snaclec B8.